Consider the following 203-residue polypeptide: Orotate phosphoribosyltransferase (203 aa).

5-phospho-alpha-D-ribose 1-diphosphate-binding positions include Arg94, Lys98, His100, and 120-128 (EDLISTGGS). Residue Ser124 participates in orotate binding.

Belongs to the purine/pyrimidine phosphoribosyltransferase family. PyrE subfamily. Homodimer. The cofactor is Mg(2+).

The catalysed reaction is orotidine 5'-phosphate + diphosphate = orotate + 5-phospho-alpha-D-ribose 1-diphosphate. The protein operates within pyrimidine metabolism; UMP biosynthesis via de novo pathway; UMP from orotate: step 1/2. Catalyzes the transfer of a ribosyl phosphate group from 5-phosphoribose 1-diphosphate to orotate, leading to the formation of orotidine monophosphate (OMP). The polypeptide is Orotate phosphoribosyltransferase (Staphylococcus saprophyticus subsp. saprophyticus (strain ATCC 15305 / DSM 20229 / NCIMB 8711 / NCTC 7292 / S-41)).